A 561-amino-acid chain; its full sequence is Putative transport protein AHA_2450 (561 aa).

5 consecutive transmembrane segments (helical) span residues 8–28, 37–57, 66–86, 90–110, and 161–181; these read LLHQ…LLLG, IGNT…GFEF, FMLF…SVFL, IHYI…TVGL, and NMGI…MLVV. RCK C-terminal domains lie at 206–291 and 293–376; these read SDNE…NYRN and KEVF…KIGF. Transmembrane regions (helical) follow at residues 386–406, 409–429, 450–470, 476–496, and 541–561; these read LVAF…SLVF, LEFG…MGYL, LGLA…ILDH, AVVL…GYLF, and TYAV…GFWF.

The protein belongs to the AAE transporter (TC 2.A.81) family. YbjL subfamily.

It localises to the cell membrane. This is Putative transport protein AHA_2450 from Aeromonas hydrophila subsp. hydrophila (strain ATCC 7966 / DSM 30187 / BCRC 13018 / CCUG 14551 / JCM 1027 / KCTC 2358 / NCIMB 9240 / NCTC 8049).